The sequence spans 582 residues: Trans-activating transcriptional regulatory protein (582 aa).

The segment at 101–131 is disordered; that stretch reads QPVVEQPSPSSAYHAESFEHSAGVNQPSATG.

Belongs to the nucleopolyhedrovirus IE-1 protein family. As to quaternary structure, homodimer. Interacts with helicase and LEF-3. Post-translationally, phosphorylated.

It localises to the host nucleus. Functionally, regulatory transcriptional protein, which trans-activates gene expression from early baculovirus promoters. Can also trans-activate its own promoter, suggesting an autoregulation during infection of host cells. Also promotes viral DNA genome replication via the N-terminal region. This is Trans-activating transcriptional regulatory protein (IE1) from Autographa californica nuclear polyhedrosis virus (AcMNPV).